The chain runs to 493 residues: Cyclin-dependent kinase-like 2 (493 aa).

Residues 4-287 (YENLGLVGEG…CAELLHHDFF (284 aa)) form the Protein kinase domain. ATP-binding positions include 10-18 (VGEGSYGMV) and Lys33. The short motif at 45–51 (KKIAMRE) is the [NKR]KIAxRE element. Asp126 (proton acceptor) is an active-site residue. Positions 363–384 (GEKAEKGNRASNASCLHDSRTS) are disordered.

It belongs to the protein kinase superfamily. CMGC Ser/Thr protein kinase family. CDC2/CDKX subfamily. Expressed in testis and kidney, and at lower level in brain and lung.

The protein resides in the cytoplasm. It localises to the nucleus. The catalysed reaction is L-seryl-[protein] + ATP = O-phospho-L-seryl-[protein] + ADP + H(+). It catalyses the reaction L-threonyl-[protein] + ATP = O-phospho-L-threonyl-[protein] + ADP + H(+). The polypeptide is Cyclin-dependent kinase-like 2 (Homo sapiens (Human)).